The following is a 597-amino-acid chain: Probable translation initiation factor IF-2 (597 aa).

Residues 8–225 (LRQPIVVVLG…LLAGLTQQYL (218 aa)) enclose the tr-type G domain. Residues 17 to 24 (GHVDHGKT) form a G1 region. 17–24 (GHVDHGKT) contacts GTP. A G2 region spans residues 42–46 (EMTQE). The G3 stretch occupies residues 81 to 84 (DTPG). GTP is bound by residues 81 to 85 (DTPGH) and 135 to 138 (NKID). Residues 135–138 (NKID) form a G4 region. Residues 203 to 205 (SGK) are G5.

The protein belongs to the TRAFAC class translation factor GTPase superfamily. Classic translation factor GTPase family. IF-2 subfamily.

In terms of biological role, function in general translation initiation by promoting the binding of the formylmethionine-tRNA to ribosomes. Seems to function along with eIF-2. This Metallosphaera sedula (strain ATCC 51363 / DSM 5348 / JCM 9185 / NBRC 15509 / TH2) protein is Probable translation initiation factor IF-2.